The primary structure comprises 619 residues: tRNA (guanine(37)-N(1))-methyltransferase 2 (619 aa).

A mitochondrion-targeting transit peptide spans 1–10 (MVSKLSLFRA). S-adenosyl-L-methionine-binding positions include arginine 434, 472–473 (DL), 500–501 (DG), and asparagine 523.

Belongs to the class I-like SAM-binding methyltransferase superfamily. TRM5/TYW2 family. Monomer.

It is found in the mitochondrion matrix. Its subcellular location is the nucleus. The protein localises to the cytoplasm. The enzyme catalyses guanosine(37) in tRNA + S-adenosyl-L-methionine = N(1)-methylguanosine(37) in tRNA + S-adenosyl-L-homocysteine + H(+). In terms of biological role, specifically methylates the N1 position of guanosine-37 in various cytoplasmic and mitochondrial tRNAs. Methylation is not dependent on the nature of the nucleoside 5' of the target nucleoside. This is the first step in the biosynthesis of wybutosine (yW), a modified base adjacent to the anticodon of tRNAs and required for accurate decoding. This chain is tRNA (guanine(37)-N(1))-methyltransferase 2, found in Arabidopsis thaliana (Mouse-ear cress).